Reading from the N-terminus, the 499-residue chain is WD repeat-containing protein 55 homolog (499 aa).

Residues 1–130 (MHTHNNFKTP…EATFDLDVDD (130 aa)) form a disordered region. Composition is skewed to acidic residues over residues 12 to 23 (DEDELDDLDEDM) and 31 to 48 (IEQEVLNESDSDNDEYDL). Residues 91–103 (DDAGGASAGGATS) show a composition bias toward low complexity. Polar residues predominate over residues 113–122 (PSGSNRQSEA). WD repeat units lie at residues 154-193 (KLEDFITDICFHPDRDIIALATIIGDVHLYEYDNEANKLL), 198-237 (VHSKACRDVEFTEDGRFLLTCSKDKCVMVTDMETEKLKKL), 241-279 (AHDDAINTLHVLNENLFATGDDAGTVKLWDLRTKNAIFE), 282-321 (ELEDQITQLTTNDQNKLLLATSADGYLTTFNIAARKMYVQ), 324-363 (PYEEELSCMGIYRGDSKLVVGTSKGRLYTYNWGQFGYHCD), and 408-447 (QHNMPIESLDVNSSGELIASSSHNNDVRFWNVKYFEDFGD). Positions 480-499 (TKEDADDDDHDPSAGPSNMA) are disordered.

Belongs to the WD repeat WDR55 family.

The polypeptide is WD repeat-containing protein 55 homolog (Drosophila yakuba (Fruit fly)).